Here is a 462-residue protein sequence, read N- to C-terminus: MLLVDKVAQRVVACAAFVVSGGVPTVAVALSGGRDSAALLHAVAAWRDAAGVPVRLVALHIHHGLQADADAWEAACARMAAAVGAAFRVRRVRVSTDAGRGIEEAAREARYAALDALCAETGATLLLTAHHLDDQAETVLLQLLRGAGLDGLSAMPMARERRVTLLRPWLDVPRGDIEAYARAHALAWVEDPSNGDARYARNALRPLLAGMAGHFPAYRASLARSAAHLAEAAALIEEVAQTDLARIAPAGTLAVAGLAALSGPRQRAALRAWLAGAGLRAVSSRRLEDLRAQLLGARADGAPCVRLPGAQVRRYRGQAWIEAAGQPGAGPADCPIAVSRFDPARAEVQRVDVAAWGGALLFSPAQAEGIDARILQAPLSLAARRGGERIVLRPGGPSRALKQAYQEAGIPAWARARLPLLYAGERLVFAAGLGPDRSAVAMGSGWHVAWLPAVGQDGLDAG.

An ATP-binding site is contributed by 31 to 36; the sequence is SGGRDS.

This sequence belongs to the tRNA(Ile)-lysidine synthase family.

The protein resides in the cytoplasm. The enzyme catalyses cytidine(34) in tRNA(Ile2) + L-lysine + ATP = lysidine(34) in tRNA(Ile2) + AMP + diphosphate + H(+). In terms of biological role, ligates lysine onto the cytidine present at position 34 of the AUA codon-specific tRNA(Ile) that contains the anticodon CAU, in an ATP-dependent manner. Cytidine is converted to lysidine, thus changing the amino acid specificity of the tRNA from methionine to isoleucine. The chain is tRNA(Ile)-lysidine synthase from Ralstonia nicotianae (strain ATCC BAA-1114 / GMI1000) (Ralstonia solanacearum).